A 314-amino-acid chain; its full sequence is UPF0761 membrane protein VP0125 (314 aa).

6 consecutive transmembrane segments (helical) span residues 41–61 (YLAY…LSIL), 104–124 (MSAV…SNID), 139–159 (LVFS…LVGA), 185–205 (FLRW…YILV), 217–237 (VGAA…ALYI), and 249–269 (ALAA…IVLL). A disordered region spans residues 295–314 (ESQLANEGSESSDSANSTSQ).

It belongs to the UPF0761 family.

The protein resides in the cell inner membrane. This Vibrio parahaemolyticus serotype O3:K6 (strain RIMD 2210633) protein is UPF0761 membrane protein VP0125.